The primary structure comprises 1185 residues: MTSKYDALLHNQSTNTNPFSKLQDRSSLLGEKFTKVLVANRSEIAIRVFRTAHELSMHTVAIYSYEDRLSMHRQKADESYPIGKVGQYSPVGAYLAIDEIVSIAKRTGANLVHPGYGFLSENAEFARKVNEAGMQFVGPSPEVIDSLGDKTKARAIAIRCGVPVVPGTPGPVEHYEEAEAFVKEYGLPVIIKAAMGGGGRGMRVVRSADTLKESFERARSEALASFGDGTVFIERFLDKPKHIEIQLMADKAGNVIHLHERDCSVQRRHQKVVEIAPAKDLDPKIRQALYDDAIKIAKEVKYCNAGTAEFLLDQKGRHYFIEINPRIQVEHTITEEITGVDIVSAQLHVAAGFTLPEIGLTQDKISTRGFAIQCRVTTEDPNNGFAPDIGKIEVYRSAGGNGVRLDGANGFAGSVITPHYDSMLVKCTCHDATYEYTRRKMIRSLIEFRVRGVKTNIPFVLRLLMHDTFIQGNCWTTFIDDTPELFQLYRSRNRAQKLLAYLGDLAVNGSSIKGQNGEPALKSEIVMPVLLDSTGNQIDVSHPSEKGWRKLLLDNGPAAFAKAVRNHKRGLIMDTTWRDAHQSLLATRVRTIDLVNIAPYTSHALASAYSLEMWGGATFDVSMRFLHECPWDRLRRLRKLVPNIPFQMLLRGANGLCYSSLPDNVIYFFCEQAKKNGIDIFRVFDALNDVNNLSLGIDAAKRAGGVVEATMCYSGDMLNPKKKYNLDYYVNLVDKMVEMGIHILGIKDMAGVMKPKAARLLISAIREKHPELPIHVHTHDSAGTAVASMAAALEAGADVVDVATDSMSGLTSQPSFGAVLASVDGTDKQLEFDNNQLREIDSYWAQMRLLYSPFESEIKGTDSDVYNHEIPGGQLTNLKFQATSLGLGTQWAETKKAYIEANKLLGDIIKVTPTSKVVGDLAQFMVQNKLSAEDVENRATTLDFPASVLDFFQGLMGQPYGGFPEPLRTNVLKGRRQPLTDRPGKFLPAADFDAIRKLLSEKFGVSSDCDIAAYTQFPGVFEEYRQFVDRYGDLTTVPTKFFLSRPEMNEEMHVEIDQGKTLIVKFVALGPLNPRTGQREVYFELNGENRHVTVEDKKAAIETVTRPRADPGNPGHVAAPMSGTIVEIRVKEGAKVKKGDIIAVLSAMKMEIVISAPHSGVLKSLAVVQGDSVNGGDLCAVLEHE.

Positions 32–484 (KFTKVLVANR…WTTFIDDTPE (453 aa)) constitute a Biotin carboxylation domain. ATP is bound by residues Lys150, Glu234, and His269. One can recognise an ATP-grasp domain in the interval 154 to 351 (RAIAIRCGVP…IVSAQLHVAA (198 aa)). Arg326 is a catalytic residue. Positions 570-838 (GLIMDTTWRD…QLEFDNNQLR (269 aa)) constitute a Pyruvate carboxyltransferase domain. Residues 578-582 (RDAHQ) and Arg651 contribute to the substrate site. An a divalent metal cation-binding site is contributed by Asp579. Positions 747, 777, and 779 each coordinate a divalent metal cation. Lys747 carries the N6-carboxylysine modification. Substrate is bound at residue Thr912. Residues 1108–1183 (RADPGNPGHV…NGGDLCAVLE (76 aa)) form the Biotinyl-binding domain. At Lys1149 the chain carries N6-biotinyllysine.

Biotin is required as a cofactor. The cofactor is Zn(2+).

It is found in the cytoplasm. It catalyses the reaction hydrogencarbonate + pyruvate + ATP = oxaloacetate + ADP + phosphate + H(+). It participates in carbohydrate biosynthesis; gluconeogenesis. Its function is as follows. Pyruvate carboxylase catalyzes a 2-step reaction, involving the ATP-dependent carboxylation of the covalently attached biotin in the first step and the transfer of the carboxyl group to pyruvate in the second. The chain is Pyruvate carboxylase (pyr1) from Schizosaccharomyces pombe (strain 972 / ATCC 24843) (Fission yeast).